Here is a 274-residue protein sequence, read N- to C-terminus: Large ribosomal subunit protein uL2 (274 aa).

The tract at residues 223–274 (VAMNPVDHPHGGGEGRTSGGRHPVTPWGVPTKGYKTRSNKRTDKYIVRRRNK) is disordered.

The protein belongs to the universal ribosomal protein uL2 family. In terms of assembly, part of the 50S ribosomal subunit. Forms a bridge to the 30S subunit in the 70S ribosome.

Its function is as follows. One of the primary rRNA binding proteins. Required for association of the 30S and 50S subunits to form the 70S ribosome, for tRNA binding and peptide bond formation. It has been suggested to have peptidyltransferase activity; this is somewhat controversial. Makes several contacts with the 16S rRNA in the 70S ribosome. The polypeptide is Large ribosomal subunit protein uL2 (Shewanella baltica (strain OS223)).